The chain runs to 389 residues: UDP-N-acetylglucosamine--N-acetylmuramyl-(pentapeptide) pyrophosphoryl-undecaprenol N-acetylglucosamine transferase (389 aa).

Residues 17–19 (TAG), Asn137, Arg179, Ser213, and Gln308 each bind UDP-N-acetyl-alpha-D-glucosamine.

It belongs to the glycosyltransferase 28 family. MurG subfamily.

The protein localises to the cell membrane. The enzyme catalyses di-trans,octa-cis-undecaprenyl diphospho-N-acetyl-alpha-D-muramoyl-L-alanyl-D-glutamyl-meso-2,6-diaminopimeloyl-D-alanyl-D-alanine + UDP-N-acetyl-alpha-D-glucosamine = di-trans,octa-cis-undecaprenyl diphospho-[N-acetyl-alpha-D-glucosaminyl-(1-&gt;4)]-N-acetyl-alpha-D-muramoyl-L-alanyl-D-glutamyl-meso-2,6-diaminopimeloyl-D-alanyl-D-alanine + UDP + H(+). The protein operates within cell wall biogenesis; peptidoglycan biosynthesis. Cell wall formation. Catalyzes the transfer of a GlcNAc subunit on undecaprenyl-pyrophosphoryl-MurNAc-pentapeptide (lipid intermediate I) to form undecaprenyl-pyrophosphoryl-MurNAc-(pentapeptide)GlcNAc (lipid intermediate II). This Rhodococcus erythropolis (strain PR4 / NBRC 100887) protein is UDP-N-acetylglucosamine--N-acetylmuramyl-(pentapeptide) pyrophosphoryl-undecaprenol N-acetylglucosamine transferase.